A 238-amino-acid chain; its full sequence is Ribosomal RNA large subunit methyltransferase E (238 aa).

S-adenosyl-L-methionine is bound by residues G76, W78, D99, D115, and D139. K179 serves as the catalytic Proton acceptor.

This sequence belongs to the class I-like SAM-binding methyltransferase superfamily. RNA methyltransferase RlmE family.

The protein localises to the cytoplasm. It catalyses the reaction uridine(2552) in 23S rRNA + S-adenosyl-L-methionine = 2'-O-methyluridine(2552) in 23S rRNA + S-adenosyl-L-homocysteine + H(+). Specifically methylates the uridine in position 2552 of 23S rRNA at the 2'-O position of the ribose in the fully assembled 50S ribosomal subunit. The protein is Ribosomal RNA large subunit methyltransferase E of Rhodopseudomonas palustris (strain BisB18).